The primary structure comprises 239 residues: UDP-2,3-diacylglucosamine hydrolase (239 aa).

Residues D8, H10, D41, N78, and H113 each coordinate Mn(2+). 78–79 (NR) contacts substrate. The substrate site is built by D121, S159, N163, K166, and H194. Residues H194 and H196 each contribute to the Mn(2+) site.

This sequence belongs to the LpxH family. Mn(2+) serves as cofactor.

Its subcellular location is the cell inner membrane. It carries out the reaction UDP-2-N,3-O-bis[(3R)-3-hydroxytetradecanoyl]-alpha-D-glucosamine + H2O = 2-N,3-O-bis[(3R)-3-hydroxytetradecanoyl]-alpha-D-glucosaminyl 1-phosphate + UMP + 2 H(+). The protein operates within glycolipid biosynthesis; lipid IV(A) biosynthesis; lipid IV(A) from (3R)-3-hydroxytetradecanoyl-[acyl-carrier-protein] and UDP-N-acetyl-alpha-D-glucosamine: step 4/6. Functionally, hydrolyzes the pyrophosphate bond of UDP-2,3-diacylglucosamine to yield 2,3-diacylglucosamine 1-phosphate (lipid X) and UMP by catalyzing the attack of water at the alpha-P atom. Involved in the biosynthesis of lipid A, a phosphorylated glycolipid that anchors the lipopolysaccharide to the outer membrane of the cell. The polypeptide is UDP-2,3-diacylglucosamine hydrolase (Shewanella sp. (strain MR-4)).